The sequence spans 75 residues: Insecticidal toxin OcyC10 (75 aa).

The signal sequence occupies residues 1-19 (MNFATKIVILLLVAALILA). Disulfide bonds link Cys-50–Cys-62 and Cys-56–Cys-68.

As to expression, expressed by the venom gland.

Its subcellular location is the secreted. Its function is as follows. Insecticidal toxin. This chain is Insecticidal toxin OcyC10, found in Opisthacanthus cayaporum (South American scorpion).